Consider the following 513-residue polypeptide: ATP synthase subunit alpha (513 aa).

An ATP-binding site is contributed by 169–176 (GDRQTGKT).

Belongs to the ATPase alpha/beta chains family. In terms of assembly, F-type ATPases have 2 components, CF(1) - the catalytic core - and CF(0) - the membrane proton channel. CF(1) has five subunits: alpha(3), beta(3), gamma(1), delta(1), epsilon(1). CF(0) has three main subunits: a(1), b(2) and c(9-12). The alpha and beta chains form an alternating ring which encloses part of the gamma chain. CF(1) is attached to CF(0) by a central stalk formed by the gamma and epsilon chains, while a peripheral stalk is formed by the delta and b chains.

The protein resides in the cell inner membrane. The enzyme catalyses ATP + H2O + 4 H(+)(in) = ADP + phosphate + 5 H(+)(out). Its function is as follows. Produces ATP from ADP in the presence of a proton gradient across the membrane. The alpha chain is a regulatory subunit. The chain is ATP synthase subunit alpha from Glaesserella parasuis serovar 5 (strain SH0165) (Haemophilus parasuis).